The primary structure comprises 1198 residues: MEDNSVLNEDSNLEHVEGQPRRSMSQPVLNVEGDKRTSSTSATQQQVLSGAFSSADVRSIPIIQTWEENKALKTKITILRGELQMYQRRYSEAKEASQKRVKEVMDDYVDLKLGQENVQEKMEQYKLMEEDLLAMQSRIETSEDNFARQMKEFEAQKHAMEERIKELELSATDANNTTVGSFRGTLDDILKKNDPDFTLTSGYEERKINDLEAKLLSEIDKVAELEDHIQQLRQELDDQSARLADSENVRAQLEAATGQGILGAAGNAMVPNSTFMIGNGRESQTRDQLNYIDDLETKLADAKKENDKARQALVEYMNKCSKLEHEIRTMVKNSTFDSSSMLLGGQTSDELKIQIGKVNGELNVLRAENRELRIRCDQLTGGDGNLSISLGQSRLMAGIATNDVDSIGQGNETGGTSMRILPRESQLDDLEESKLPLMDTSSAVRNQQQFASMWEDFESVKDSLQNNHNDTLEGSFNSSMPPPGRDATQSFLSQKSFKNSPIVMQKPKSLHLHLKSHQSEGAGEQIQNNSFSTKTASPHVSQSHIPILHDMQQILDSSAMFLEGQHDVAVNVEQMQEKMSQIREALARLFERLKSSAALFEEILERMGSSDPNADKIKKMKLAFETSINDKLNVSAILEAAEKDLHNMSLNFSILEKSIVSQAAEASRRFTIAPDAEDVASSSLLNASYSPLFKFTSNSDIVEKLQNEVSELKNELEMARTRDMRSPLNGSSGRLSDVQINTNRMFEDLEVSEATLQKAKEENSTLKSQFAELEANLHQVNSKLGEVRCELNEALARVDGEQETRVKAENALEEARQLISSLKHEENELKKTITDMGMRLNEAKKSDEFLKSELSTALEEEKKSQNLADELSEELNGWRMRTKEAENKVEHASSEKSEMLERIVHLETEMEKLSTSEIAADYCSTKMTERKKEIELAKYREDFENAAIVGLERISKEISELTKKTLKAKIIPSNISSIQLVCDELCRRLSREREQQHEYAKVMRDVNEKIEKLQLEKDALEHELKMMSSNNENVPPVGTSVSGMPTKTSNQKCAQPHYTSPTRQLLHESTMAVDAIVQKLKKTHNMSGMGPELKETIGNVINESRVLRDFLHQKLILFKGIDMSNWKNETVDQLITDLGQLHQDNLMLEEQIKKYKKELKLTKSAIPTLGVEFQDRIKTEIGKIATDMGGAVKEIRKK.

Over residues 1 to 10 the composition is skewed to polar residues; it reads MEDNSVLNED. Positions 1–45 are disordered; the sequence is MEDNSVLNEDSNLEHVEGQPRRSMSQPVLNVEGDKRTSSTSATQQ. Coiled-coil stretches lie at residues 67-381, 566-603, 694-916, 983-1035, and 1127-1175; these read EENK…QLTG, HDVA…FEEI, KFTS…LSTS, DELC…ENVP, and KNET…EFQD.

It localises to the cytoplasm. The protein localises to the cytoskeleton. Its subcellular location is the microtubule organizing center. The protein resides in the centrosome. Its function is as follows. Plays a central role in centrosome maturation and mitotic spindle assembly during the first division of the zygote. Required for the centrosomal localization of air-1 and zyg-9. Probably not required in late embryogenesis and during larval development. This chain is Spindle-defective protein 5 (spd-5), found in Caenorhabditis elegans.